Consider the following 362-residue polypeptide: GTPase Obg (362 aa).

The Obg domain maps to 1–159 (MKFIDEARIE…RKLKLELKVL (159 aa)). The interval 129–148 (HFKSSTNRAPRQKTNGKEGE) is disordered. A compositionally biased stretch (polar residues) spans 130–141 (FKSSTNRAPRQK). The OBG-type G domain occupies 160–334 (ADVGLLGMPN…LCYALQDYLD (175 aa)). Residues 166–173 (GMPNAGKS), 191–195 (FTTLH), 213–216 (DIPG), 284–287 (NKVD), and 315–317 (SAL) each bind GTP. Mg(2+)-binding residues include serine 173 and threonine 193. The segment at 340–362 (RDDAEERAADPRYQDQAADKSPD) is disordered.

Belongs to the TRAFAC class OBG-HflX-like GTPase superfamily. OBG GTPase family. Monomer. Requires Mg(2+) as cofactor.

Its subcellular location is the cytoplasm. Its function is as follows. An essential GTPase which binds GTP, GDP and possibly (p)ppGpp with moderate affinity, with high nucleotide exchange rates and a fairly low GTP hydrolysis rate. Plays a role in control of the cell cycle, stress response, ribosome biogenesis and in those bacteria that undergo differentiation, in morphogenesis control. In Polynucleobacter asymbioticus (strain DSM 18221 / CIP 109841 / QLW-P1DMWA-1) (Polynucleobacter necessarius subsp. asymbioticus), this protein is GTPase Obg.